The following is a 567-amino-acid chain: Potassium-transporting ATPase potassium-binding subunit (567 aa).

A run of 11 helical transmembrane segments spans residues 5–25, 64–84, 136–156, 179–199, 254–274, 285–305, 332–352, 359–376, 421–441, 486–506, and 529–549; these read GWIQ…PLGG, TTYA…LYML, GLTV…IALI, LYVL…LGVP, ISNM…TNVF, WAIF…CYWA, IAMS…AVIA, ALGG…EIII, MLAV…ASVI, ITIG…AMAI, and LFVG…FFPA.

The protein belongs to the KdpA family. In terms of assembly, the system is composed of three essential subunits: KdpA, KdpB and KdpC.

The protein resides in the cell inner membrane. Functionally, part of the high-affinity ATP-driven potassium transport (or Kdp) system, which catalyzes the hydrolysis of ATP coupled with the electrogenic transport of potassium into the cytoplasm. This subunit binds the periplasmic potassium ions and delivers the ions to the membrane domain of KdpB through an intramembrane tunnel. The chain is Potassium-transporting ATPase potassium-binding subunit from Brucella anthropi (strain ATCC 49188 / DSM 6882 / CCUG 24695 / JCM 21032 / LMG 3331 / NBRC 15819 / NCTC 12168 / Alc 37) (Ochrobactrum anthropi).